Consider the following 334-residue polypeptide: Dolichyl-phosphate beta-glucosyltransferase (334 aa).

The Lumenal segment spans residues 1 to 12; the sequence is MRALRFLIENRN. Residues 13-33 form a helical membrane-spanning segment; sequence TVFFTLLVALVLSLYLLVYLF. The Cytoplasmic segment spans residues 34–334; that stretch reads SHTPRPPYPE…LGIYRDNKKC (301 aa).

It belongs to the glycosyltransferase 2 family.

The protein resides in the endoplasmic reticulum membrane. The enzyme catalyses a di-trans,poly-cis-dolichyl phosphate + UDP-alpha-D-glucose = a di-trans,poly-cis-dolichyl beta-D-glucosyl phosphate + UDP. The protein operates within protein modification; protein glycosylation. Endoplasmic reticulum membrane-bound UDP-glucose:dolichyl-phosphate glucosyltransferase involved in protein N-linked glycosylation. The protein is Dolichyl-phosphate beta-glucosyltransferase of Saccharomyces cerevisiae (strain ATCC 204508 / S288c) (Baker's yeast).